Here is a 191-residue protein sequence, read N- to C-terminus: Probable GTP-binding protein EngB (191 aa).

Residues 13 to 189 form the EngB-type G domain; the sequence is DRLEVAFAGR…RAEIVALLPD (177 aa). GTP-binding positions include 21–28, 48–52, 67–70, 134–137, and 168–170; these read GRSNVGKS, GRTRE, DLPG, TKTD, and TSS. Residues S28 and T50 each contribute to the Mg(2+) site.

It belongs to the TRAFAC class TrmE-Era-EngA-EngB-Septin-like GTPase superfamily. EngB GTPase family. Requires Mg(2+) as cofactor.

Necessary for normal cell division and for the maintenance of normal septation. In Maricaulis maris (strain MCS10) (Caulobacter maris), this protein is Probable GTP-binding protein EngB.